The sequence spans 898 residues: MRKGALKDPEIADLFFKDDPEELFIDLHEIGHGSFGAVYFATNAHTNEVVAVKKMSYSGKQTHEKWQDILKEVKFLQQLKHPNTIEYKGCYLKEHTAWLVMEYCLGSASDLLEVHKKPLQEVEIAAITHGALQGLAYLHFHSLIHRDIKAGNILLTEPGQVKLADFGSASMASPANSFVGTPYWMAPEVILAMDEGQYDGKVDIWSLGITCIELAERKPPLFNMNAMSALYHIAQNDSPTLQSREWTDSFRRFVDYCLHKIPQERPAAVELLRHDFIRRERPPKVLIDLIQRTKDAVRELDNLQYRKMKKILFQETRNGPLNESQEEEEDGEQGSNLNREVDSLGSIHSIPSTSVSTGSRSSSVNSMQEVMDESSSELVMMQEDEGTANSSASTVHKKDHVFVRDEAGHGDPRPEPRPTQSVQSRALHYRNRERFATIKSASLVTRQIHEHEQENELREQMSGYKRMRRQHQKQLIALENKLKAEMDEHRLKLQKEVETHANNSSIELEKLAKKQVATIEKEAKVAAADEKKFQQQILAQQKKDLTTFLESQKKQYKICKEKIKEEMNEDHSTPKKEKQERISKHKENLQHTQAEEEAHLLTQQRLYYDRNCRFFKRKIMIKRHEVEQQNIREELNKKRTQKEMEHAMLIRHDESTRELEYRQLHTLQKLRMDLIRLQHQTELENQLEYNKRRERELHRKHVMELRQQPKNLKAMEMQIKKQFQDTCKVQTKQYKALKNHQLEVTPKNEHKAILKTLKDEQTRKLAILAEQYEQSINEMMASQALRLDEAQEAECQALRLQLQQEMELLNAYQSKIKMQTEAQHERELQKLEQRVSLRRAHLEQKIEEELAALQKERSERIKTLLERQERETETFDMESLRMGFGNLVTLDFPKEDYR.

Positions 24–277 constitute a Protein kinase domain; the sequence is FIDLHEIGHG…AVELLRHDFI (254 aa). ATP is bound by residues 30–38 and lysine 53; that span reads IGHGSFGAV. Catalysis depends on aspartate 147, which acts as the Proton acceptor. 2 disordered regions span residues 316-375 and 405-424; these read TRNG…DESS and DEAGHGDPRPEPRPTQSVQS. A Phosphoserine; by ATM modification is found at serine 324. 3 positions are modified to phosphoserine: serine 343, serine 346, and serine 349. Over residues 349-366 the composition is skewed to low complexity; the sequence is SIPSTSVSTGSRSSSVNS. Phosphothreonine is present on threonine 357. At serine 359 the chain carries Phosphoserine. Positions 405 to 416 are enriched in basic and acidic residues; it reads DEAGHGDPRPEP. Serine 442 is subject to Phosphoserine. Coiled coils occupy residues 452 to 502, 548 to 649, and 754 to 871; these read EQEN…THAN, FLES…HAML, and LKTL…QERE. The segment at 565-596 is disordered; it reads EEMNEDHSTPKKEKQERISKHKENLQHTQAEE. The residue at position 830 (lysine 830) is an N6-acetyllysine.

It belongs to the protein kinase superfamily. STE Ser/Thr protein kinase family. STE20 subfamily. In terms of assembly, self-associates. Interacts with ERN1 and TRAF2. Interaction with TRAF2 is facilitated under ER stress conditions, such as treatment with tunicamycin, and may promote TRAF2 phosphorylation. Interacts (via N-terminus) with STK25; the interaction promotes STK25 abundance at the level of protein expression and/or stability. In terms of processing, autophosphorylated. Phosphorylation at Ser-324 by ATM following DNA damage is required for activation of the p38/MAPK14 stress-activated MAPK cascade. Phosphorylated at Ser-324 and on Tyr residues during T cell activation. Phosphorylated by LRRK2.

The protein localises to the cytoplasm. The protein resides in the cell membrane. It localises to the membrane raft. Its subcellular location is the lipid droplet. The enzyme catalyses L-seryl-[protein] + ATP = O-phospho-L-seryl-[protein] + ADP + H(+). It carries out the reaction L-threonyl-[protein] + ATP = O-phospho-L-threonyl-[protein] + ADP + H(+). Its function is as follows. Serine/threonine-protein kinase that acts as a regulator of the p38/MAPK14 stress-activated MAPK cascade and of the MAPK8/JNK cascade. In response to DNA damage, involved in the G2/M transition DNA damage checkpoint by activating the p38/MAPK14 stress-activated MAPK cascade, probably by mediating phosphorylation of upstream MAP2K3 and MAP2K6 kinases. Inhibits basal activity of the MAPK8/JNK cascade and diminishes its activation in response to epidermal growth factor (EGF). Positively regulates canonical T cell receptor (TCR) signaling by preventing early PTPN6/SHP1-mediated inactivation of LCK, ensuring sustained TCR signaling that is required for optimal activation and differentiation of T cells. Phosphorylates PTPN6/SHP1 on 'Thr-394', leading to its polyubiquitination and subsequent proteasomal degradation. Required for cell surface expression of metalloprotease ADAM10 on type 1 transitional B cells which is necessary for their NOTCH-mediated development into marginal zone B cells. Also required for the NOTCH-mediated terminal differentiation of splenic conventional type 2 dendritic cells. Positively regulates osteoblast differentiation by acting as an upstream activator of the JNK pathway. Promotes JNK signaling in hepatocytes and positively regulates hepatocyte lipid storage by inhibiting beta-oxidation and triacylglycerol secretion while enhancing lipid synthesis. Restricts age-associated inflammation by negatively regulating differentiation of macrophages and their production of pro-inflammatory cytokines. Plays a role in negatively regulating the abundance of regulatory T cells in white adipose tissue. The protein is Serine/threonine-protein kinase TAO3 (Taok3) of Mus musculus (Mouse).